Here is a 383-residue protein sequence, read N- to C-terminus: Succinyl-diaminopimelate desuccinylase (383 aa).

A Zn(2+)-binding site is contributed by H73. D75 is an active-site residue. Zn(2+) is bound at residue D107. E141 acts as the Proton acceptor in catalysis. Residues E142, E170, and H356 each coordinate Zn(2+).

Belongs to the peptidase M20A family. DapE subfamily. As to quaternary structure, homodimer. Requires Zn(2+) as cofactor. It depends on Co(2+) as a cofactor.

The enzyme catalyses N-succinyl-(2S,6S)-2,6-diaminopimelate + H2O = (2S,6S)-2,6-diaminopimelate + succinate. It functions in the pathway amino-acid biosynthesis; L-lysine biosynthesis via DAP pathway; LL-2,6-diaminopimelate from (S)-tetrahydrodipicolinate (succinylase route): step 3/3. Functionally, catalyzes the hydrolysis of N-succinyl-L,L-diaminopimelic acid (SDAP), forming succinate and LL-2,6-diaminopimelate (DAP), an intermediate involved in the bacterial biosynthesis of lysine and meso-diaminopimelic acid, an essential component of bacterial cell walls. In Pseudomonas fluorescens (strain ATCC BAA-477 / NRRL B-23932 / Pf-5), this protein is Succinyl-diaminopimelate desuccinylase.